Consider the following 852-residue polypeptide: Exported protein YdbA (852 aa).

The first 21 residues, 1-21 (MQRKTLLSACIALALSGQGWA), serve as a signal peptide directing secretion. 5 disordered regions span residues 30 to 50 (TTGE…KLSP), 91 to 145 (DDDH…FNND), 307 to 354 (TITN…QDGD), 407 to 449 (TNGG…KVIQ), and 506 to 531 (NGGT…VDGK). Over residues 307–319 (TITNGGTGTQING) the composition is skewed to low complexity. Polar residues predominate over residues 339–348 (GTEINGNNGK). The span at 506 to 516 (NGGTGTQINGN) shows a compositional bias: low complexity. Residues 517–526 (DATANNSGKT) show a composition bias toward polar residues.

Its subcellular location is the secreted. Functionally, the full-length protein (which is about 2000 amino acids long) is part of the autotransporter family. This is Exported protein YdbA (ydbA) from Escherichia coli (strain K12).